Reading from the N-terminus, the 591-residue chain is Aspartate--tRNA ligase (591 aa).

Glutamate 171 contributes to the L-aspartate binding site. Residues 195 to 198 (QLFK) are aspartate. Arginine 217 contacts L-aspartate. ATP is bound by residues 217-219 (RDE) and glutamine 226. Position 448 (histidine 448) interacts with L-aspartate. An ATP-binding site is contributed by glutamate 482. Arginine 489 is an L-aspartate binding site. 534–537 (GLDR) lines the ATP pocket.

Belongs to the class-II aminoacyl-tRNA synthetase family. Type 1 subfamily. As to quaternary structure, homodimer.

It localises to the cytoplasm. The catalysed reaction is tRNA(Asp) + L-aspartate + ATP = L-aspartyl-tRNA(Asp) + AMP + diphosphate. Functionally, catalyzes the attachment of L-aspartate to tRNA(Asp) in a two-step reaction: L-aspartate is first activated by ATP to form Asp-AMP and then transferred to the acceptor end of tRNA(Asp). The protein is Aspartate--tRNA ligase of Edwardsiella ictaluri (strain 93-146).